The primary structure comprises 267 residues: MEMTKAIVKENPRIEEIKELLEVAESREGLLTIFARCTVYYEGRAKSELGEGDRIIIIKPDGSFLIHQKKKREPVNWQPPGSKVKMEGNSLISIRRNPKETLKVDIIEAYAAVLFMAEDYEELTLTGSEAEMAELIFQNPNVIEEGFKPMFREKPIKHGIVDVLGVDREGNIVVLELKRRRADLHAVSQLKRYVDALKEEHGNKVRGILVAPSLTEGAKKLLEKLGLEFRKLEPPKKGKKKSSKQKTLDFLNDTVRITGASPPEAIQ.

It belongs to the NucS endonuclease family.

It localises to the cytoplasm. Its function is as follows. Cleaves both 3' and 5' ssDNA extremities of branched DNA structures. The protein is Endonuclease NucS of Pyrococcus furiosus (strain ATCC 43587 / DSM 3638 / JCM 8422 / Vc1).